The following is a 1486-amino-acid chain: Homeobox protein cut-like 2 (1486 aa).

The disordered stretch occupies residues 114 to 167 (DRLQPPSFDPSGQPRRDLHTSWKRNPELLSPKEQREGTSPAGPTLTEGSRLPGI). The span at 127 to 149 (PRRDLHTSWKRNPELLSPKEQRE) shows a compositional bias: basic and acidic residues. At Ser143 the chain carries Phosphoserine. The stretch at 195–374 (TLAARLGEAE…IKTELSILKA (180 aa)) forms a coiled coil. Disordered stretches follow at residues 415–481 (LLAS…LSPF), 517–549 (PTAP…PGAE), 661–690 (EIES…STSE), 716–758 (VAPR…AQAP), 800–858 (YASV…EGAT), and 964–1032 (GQAV…SGSQ). The span at 419 to 428 (PEEDPSEDDS) shows a compositional bias: acidic residues. Positions 443-460 (QQLPPPPGPEDPLSPSPG) are enriched in pro residues. Over residues 461–470 (QPLLGPSLGP) the composition is skewed to low complexity. Over residues 517–532 (PTAPATPAPGPEPLGG) the composition is skewed to pro residues. Positions 544–631 (AGPGAEEEQL…VLALRTIQVR (88 aa)) form a DNA-binding region, CUT 1. Residues 680-690 (ANGTTPASTSE) show a composition bias toward polar residues. A coiled-coil region spans residues 690-717 (EDAIKSILEQARREMQAQQQALLEMEVA). Low complexity predominate over residues 802 to 816 (SVSPSLSSSSSSGYS). Residues 834 to 844 (PEDEAAAGAED) are compositionally biased toward acidic residues. Positions 845–854 (EPPRTGELKA) are enriched in basic and acidic residues. Residues 887 to 974 (QYELYMYREV…QAVGQQPGAS (88 aa)) constitute a DNA-binding region (CUT 2). Positions 967–976 (VGQQPGASQA) are enriched in polar residues. The span at 1017-1031 (GRSSSSLSGKMYSGS) shows a compositional bias: low complexity. Positions 1038–1125 (QEIVAMSPEL…VEKLRDMKKL (88 aa)) form a DNA-binding region, CUT 3. Residues 1168–1227 (IKKPRVVLAPEEKEALRKAYQLEPYPSQQTIELLSFQLNLKTNTVINWFHNYRSRMRREM) constitute a DNA-binding region (homeobox). The disordered stretch occupies residues 1231-1453 (GTQDEPDLDP…ALHPSAKVNP (223 aa)). A compositionally biased stretch (basic and acidic residues) spans 1266–1276 (EDQKPTVKELE). A compositionally biased stretch (polar residues) spans 1283 to 1293 (ENSTPLTTQDK). Basic and acidic residues predominate over residues 1320-1334 (ELDKGQGPPKEEHPD). The span at 1381-1401 (KSASESSRCSLEVSLNSPSAA) shows a compositional bias: polar residues. Positions 1402 to 1420 (SSPGLMMSVSPVPSSSAPI) are enriched in low complexity. Positions 1421–1431 (SPSPPGAPPAK) are enriched in pro residues.

This sequence belongs to the CUT homeobox family.

It localises to the nucleus. Its function is as follows. Transcription factor involved in the control of neuronal proliferation and differentiation in the brain. Regulates dendrite development and branching, dendritic spine formation, and synaptogenesis in cortical layers II-III. Binds to DNA in a sequence-specific manner. This chain is Homeobox protein cut-like 2 (CUX2), found in Homo sapiens (Human).